We begin with the raw amino-acid sequence, 549 residues long: CTP synthase (549 aa).

The segment at 1-272 (MPPKSTTTKH…DAYVVRKLDL (272 aa)) is amidoligase domain. A CTP-binding site is contributed by serine 19. Serine 19 contributes to the UTP binding site. Residues 20-25 (SLGKGL) and aspartate 77 each bind ATP. Residues aspartate 77 and glutamate 146 each coordinate Mg(2+). CTP-binding positions include 153-155 (DIE), 193-198 (KTKPTQ), and lysine 229. Residues 193–198 (KTKPTQ) and lysine 229 contribute to the UTP site. The region spanning 297–548 (NLALVGKYID…VKAAVERKTG (252 aa)) is the Glutamine amidotransferase type-1 domain. Glycine 360 is an L-glutamine binding site. The active-site Nucleophile; for glutamine hydrolysis is the cysteine 387. L-glutamine contacts are provided by residues 388–391 (LGLQ), glutamate 411, and arginine 473. Catalysis depends on residues histidine 521 and glutamate 523.

The protein belongs to the CTP synthase family. Homotetramer.

It catalyses the reaction UTP + L-glutamine + ATP + H2O = CTP + L-glutamate + ADP + phosphate + 2 H(+). The enzyme catalyses L-glutamine + H2O = L-glutamate + NH4(+). The catalysed reaction is UTP + NH4(+) + ATP = CTP + ADP + phosphate + 2 H(+). It functions in the pathway pyrimidine metabolism; CTP biosynthesis via de novo pathway; CTP from UDP: step 2/2. With respect to regulation, allosterically activated by GTP, when glutamine is the substrate; GTP has no effect on the reaction when ammonia is the substrate. The allosteric effector GTP functions by stabilizing the protein conformation that binds the tetrahedral intermediate(s) formed during glutamine hydrolysis. Inhibited by the product CTP, via allosteric rather than competitive inhibition. Catalyzes the ATP-dependent amination of UTP to CTP with either L-glutamine or ammonia as the source of nitrogen. Regulates intracellular CTP levels through interactions with the four ribonucleotide triphosphates. In Streptomyces avermitilis (strain ATCC 31267 / DSM 46492 / JCM 5070 / NBRC 14893 / NCIMB 12804 / NRRL 8165 / MA-4680), this protein is CTP synthase.